Reading from the N-terminus, the 941-residue chain is UvrABC system protein A (941 aa).

31-38 is an ATP binding site; the sequence is GLSGSGKS. The C4-type zinc-finger motif lies at 253 to 280; that stretch reads CPICGYSMRELEPRLFSFNNPAGACPTC. 2 consecutive ABC transporter domains span residues 310-587 and 607-937; these read WDRR…PESL and ANPE…RFLK. Position 640–647 (640–647) interacts with ATP; it reads GVSGSGKS. The C4-type zinc finger occupies 740-766; the sequence is CEACQGDGVIKVEMHFLPDIYVPCDQC.

It belongs to the ABC transporter superfamily. UvrA family. Forms a heterotetramer with UvrB during the search for lesions.

It localises to the cytoplasm. Functionally, the UvrABC repair system catalyzes the recognition and processing of DNA lesions. UvrA is an ATPase and a DNA-binding protein. A damage recognition complex composed of 2 UvrA and 2 UvrB subunits scans DNA for abnormalities. When the presence of a lesion has been verified by UvrB, the UvrA molecules dissociate. This chain is UvrABC system protein A, found in Salmonella typhi.